The chain runs to 313 residues: tRNA dimethylallyltransferase (313 aa).

9-16 contacts ATP; it reads GPTATGKS. 11–16 is a substrate binding site; sequence TATGKS.

The protein belongs to the IPP transferase family. In terms of assembly, monomer. The cofactor is Mg(2+).

It catalyses the reaction adenosine(37) in tRNA + dimethylallyl diphosphate = N(6)-dimethylallyladenosine(37) in tRNA + diphosphate. Its function is as follows. Catalyzes the transfer of a dimethylallyl group onto the adenine at position 37 in tRNAs that read codons beginning with uridine, leading to the formation of N6-(dimethylallyl)adenosine (i(6)A). This is tRNA dimethylallyltransferase from Nocardia farcinica (strain IFM 10152).